The sequence spans 265 residues: Sulfur carrier protein FdhD (265 aa).

Cys-107 serves as the catalytic Cysteine persulfide intermediate.

This sequence belongs to the FdhD family.

It is found in the cytoplasm. Its function is as follows. Required for formate dehydrogenase (FDH) activity. Acts as a sulfur carrier protein that transfers sulfur from IscS to the molybdenum cofactor prior to its insertion into FDH. The sequence is that of Sulfur carrier protein FdhD from Staphylococcus aureus (strain MRSA252).